Here is a 164-residue protein sequence, read N- to C-terminus: Aspartic proteinase nepenthesin-1 (164 aa).

Positions 17–164 (YLMXLSIGTP…VSFVSAQCGA (148 aa)) constitute a Peptidase A1 domain. Residue aspartate 35 is part of the active site. An N-linked (GlcNAc...) asparagine glycan is attached at asparagine 93.

This sequence belongs to the peptidase A1 family. In terms of tissue distribution, parenchymal cells surrounding the secretory glands.

It is found in the secreted. The enzyme catalyses Similar to pepsin, but also cleaves on either side of Asp and at Lys-|-Arg.. With respect to regulation, inhibited by pepstatin and by diazoacetyl-D,L-norleucine methyl ester (DAN) in the presence of Cu(2+) ions. In terms of biological role, extracellular proteinase found in the pitcher fluid of carnivorous plants. Digest prey for nitrogen uptake. The protein is Aspartic proteinase nepenthesin-1 of Nepenthes distillatoria (Pitcher plant).